Consider the following 340-residue polypeptide: Phosphoribosylformylglycinamidine cyclo-ligase (340 aa).

Belongs to the AIR synthase family.

Its subcellular location is the cytoplasm. It carries out the reaction 2-formamido-N(1)-(5-O-phospho-beta-D-ribosyl)acetamidine + ATP = 5-amino-1-(5-phospho-beta-D-ribosyl)imidazole + ADP + phosphate + H(+). It participates in purine metabolism; IMP biosynthesis via de novo pathway; 5-amino-1-(5-phospho-D-ribosyl)imidazole from N(2)-formyl-N(1)-(5-phospho-D-ribosyl)glycinamide: step 2/2. The chain is Phosphoribosylformylglycinamidine cyclo-ligase from Streptococcus pneumoniae serotype 4 (strain ATCC BAA-334 / TIGR4).